Reading from the N-terminus, the 205-residue chain is Holliday junction branch migration complex subunit RuvA (205 aa).

Residues 1 to 64 (MIGKLKGLID…EDQIKLFGFR (64 aa)) are domain I. Residues 65 to 143 (TDHEREWFRL…ALSNVDPAVV (79 aa)) are domain II. The interval 144–154 (QLSGALDDNRA) is flexible linker. The domain III stretch occupies residues 154-205 (APRPVTDAISALVNLGYGQPQAAAAIAAAARAAGDDAATAQLIKLGLKELSK).

Belongs to the RuvA family. As to quaternary structure, homotetramer. Forms an RuvA(8)-RuvB(12)-Holliday junction (HJ) complex. HJ DNA is sandwiched between 2 RuvA tetramers; dsDNA enters through RuvA and exits via RuvB. An RuvB hexamer assembles on each DNA strand where it exits the tetramer. Each RuvB hexamer is contacted by two RuvA subunits (via domain III) on 2 adjacent RuvB subunits; this complex drives branch migration. In the full resolvosome a probable DNA-RuvA(4)-RuvB(12)-RuvC(2) complex forms which resolves the HJ.

It is found in the cytoplasm. In terms of biological role, the RuvA-RuvB-RuvC complex processes Holliday junction (HJ) DNA during genetic recombination and DNA repair, while the RuvA-RuvB complex plays an important role in the rescue of blocked DNA replication forks via replication fork reversal (RFR). RuvA specifically binds to HJ cruciform DNA, conferring on it an open structure. The RuvB hexamer acts as an ATP-dependent pump, pulling dsDNA into and through the RuvAB complex. HJ branch migration allows RuvC to scan DNA until it finds its consensus sequence, where it cleaves and resolves the cruciform DNA. The protein is Holliday junction branch migration complex subunit RuvA of Rhodopseudomonas palustris (strain BisB5).